The chain runs to 185 residues: ATP synthase subunit delta (185 aa).

Belongs to the ATPase delta chain family. As to quaternary structure, F-type ATPases have 2 components, F(1) - the catalytic core - and F(0) - the membrane proton channel. F(1) has five subunits: alpha(3), beta(3), gamma(1), delta(1), epsilon(1). F(0) has three main subunits: a(1), b(2) and c(10-14). The alpha and beta chains form an alternating ring which encloses part of the gamma chain. F(1) is attached to F(0) by a central stalk formed by the gamma and epsilon chains, while a peripheral stalk is formed by the delta and b chains.

Its subcellular location is the cell inner membrane. In terms of biological role, f(1)F(0) ATP synthase produces ATP from ADP in the presence of a proton or sodium gradient. F-type ATPases consist of two structural domains, F(1) containing the extramembraneous catalytic core and F(0) containing the membrane proton channel, linked together by a central stalk and a peripheral stalk. During catalysis, ATP synthesis in the catalytic domain of F(1) is coupled via a rotary mechanism of the central stalk subunits to proton translocation. Its function is as follows. This protein is part of the stalk that links CF(0) to CF(1). It either transmits conformational changes from CF(0) to CF(1) or is implicated in proton conduction. In Phocaeicola vulgatus (strain ATCC 8482 / DSM 1447 / JCM 5826 / CCUG 4940 / NBRC 14291 / NCTC 11154) (Bacteroides vulgatus), this protein is ATP synthase subunit delta.